The chain runs to 225 residues: Phosphoribosylformylglycinamidine synthase subunit PurQ (225 aa).

The Glutamine amidotransferase type-1 domain occupies 4–225 (RIGVITFPGT…LSVLDTLVTA (222 aa)). The Nucleophile role is filled by C87. Catalysis depends on residues H196 and E198.

In terms of assembly, part of the FGAM synthase complex composed of 1 PurL, 1 PurQ and 2 PurS subunits.

It localises to the cytoplasm. The catalysed reaction is N(2)-formyl-N(1)-(5-phospho-beta-D-ribosyl)glycinamide + L-glutamine + ATP + H2O = 2-formamido-N(1)-(5-O-phospho-beta-D-ribosyl)acetamidine + L-glutamate + ADP + phosphate + H(+). The enzyme catalyses L-glutamine + H2O = L-glutamate + NH4(+). It participates in purine metabolism; IMP biosynthesis via de novo pathway; 5-amino-1-(5-phospho-D-ribosyl)imidazole from N(2)-formyl-N(1)-(5-phospho-D-ribosyl)glycinamide: step 1/2. Its function is as follows. Part of the phosphoribosylformylglycinamidine synthase complex involved in the purines biosynthetic pathway. Catalyzes the ATP-dependent conversion of formylglycinamide ribonucleotide (FGAR) and glutamine to yield formylglycinamidine ribonucleotide (FGAM) and glutamate. The FGAM synthase complex is composed of three subunits. PurQ produces an ammonia molecule by converting glutamine to glutamate. PurL transfers the ammonia molecule to FGAR to form FGAM in an ATP-dependent manner. PurS interacts with PurQ and PurL and is thought to assist in the transfer of the ammonia molecule from PurQ to PurL. This Nocardia farcinica (strain IFM 10152) protein is Phosphoribosylformylglycinamidine synthase subunit PurQ.